A 467-amino-acid chain; its full sequence is Uronate isomerase (467 aa).

It belongs to the metallo-dependent hydrolases superfamily. Uronate isomerase family.

The enzyme catalyses D-glucuronate = D-fructuronate. It catalyses the reaction aldehydo-D-galacturonate = keto-D-tagaturonate. Its pathway is carbohydrate metabolism; pentose and glucuronate interconversion. The protein is Uronate isomerase of Haemophilus influenzae (strain 86-028NP).